The primary structure comprises 341 residues: HTH-type transcriptional repressor PurR (341 aa).

Positions 2-56 (ATIKDVAKRANVSTTTVSHVINKTRFVAEETRNAVWAAIKELHYSPSAVARSLKV) constitute an HTH lacI-type domain. Positions 4 to 23 (IKDVAKRANVSTTTVSHVIN) form a DNA-binding region, H-T-H motif. A DNA-binding region spans residues 48-56 (SAVARSLKV). Hypoxanthine-binding residues include Tyr73, Arg190, Thr192, Phe221, and Asp275.

In terms of assembly, homodimer.

It functions in the pathway purine metabolism; purine nucleotide biosynthesis [regulation]. Functionally, is the main repressor of the genes involved in the de novo synthesis of purine nucleotides, regulating purB, purC, purEK, purF, purHD, purL, purMN and guaBA expression. PurR is allosterically activated to bind its cognate DNA by binding the purine corepressors, hypoxanthine or guanine, thereby effecting transcription repression. This chain is HTH-type transcriptional repressor PurR, found in Shigella dysenteriae serotype 1 (strain Sd197).